Reading from the N-terminus, the 409-residue chain is Aspartic protease pepA (409 aa).

Residues 1–19 (MPSIVSLTAALTFVGAVIA) form the signal peptide. A propeptide spans 20–65 (SPVEKRSAFSVEQVPHTTYLKNGPAQKVKTLRKYGKPVPQSLLDAA) (activation peptide). Positions 97–404 (YLSPVTVGST…PDSPPRIGLA (308 aa)) constitute a Peptidase A1 domain. Residues D113 and D293 contribute to the active site. C329 and C364 are oxidised to a cystine. A glycan (N-linked (GlcNAc...) asparagine) is linked at N335.

It belongs to the peptidase A1 family. As to quaternary structure, monomer.

It localises to the secreted. Functionally, secreted aspartic endopeptidase that allows assimilation of proteinaceous substrates. The scissile peptide bond is attacked by a nucleophilic water molecule activated by two aspartic residues in the active site. Shows a broad primary substrate specificity. Favors hydrophobic residues at the P1 and P1' positions. This Leptosphaeria maculans (strain JN3 / isolate v23.1.3 / race Av1-4-5-6-7-8) (Blackleg fungus) protein is Aspartic protease pepA.